The following is a 383-amino-acid chain: MSPEVALNRISPMLSPFISSVVRNGKVGLDATNCLRITDLKSGCTSLTPGPNCDRFKLHIPYAGETLKWDIIFNAQYPELPPDFIFGEDAEFLPDPSALQNLASWNPSNPECLLLVVKELVQQYHQFQCSRLRESSRLMFEYQTLLEEPQYGENMEIYAGKKNNWTGEFSARFLLKLPVDFSNIPTYLLKDVNEDPGEDVALLSVSFEDTEATQVYPKLYLSPRIEHALGGSSALHIPAFPGGGCLIDYVPQVCHLLTNKVQYVIQGYHKRREYIAAFLSHFGTGVVEYDAEGFTKLTLLLMWKDFCFLVHIDLPLFFPRDQPTLTFQSVYHFTNSGQLYSQAQKNYPYSPRWDGNEMAKRAKAYFKTFVPQFQEAAFANGKL.

An N-acetylmethionine modification is found at M1. The residue at position 2 (S2) is a Phosphoserine. 2 UEV-like regions span residues D30–E147 and I275–A364.

The protein belongs to the BABAM2 family. Component of the ARISC complex, at least composed of UIMC1/RAP80, ABRAXAS1, BRCC3/BRCC36, BABAM2 and BABAM1/NBA1. Component of the BRCA1-A complex, at least composed of BRCA1, BARD1, UIMC1/RAP80, ABRAXAS1, BRCC3/BRCC36, BABAM2 and BABAM1/NBA1. In the BRCA1-A complex, interacts directly with ABRAXAS1, BRCC3/BRCC36 and BABAM1/NBA1. Binds polyubiquitin. Component of the BRISC complex, at least composed of ABRAXAS2, BRCC3/BRCC36, BABAM2 and BABAM1/NBA1. Identified in a complex with SHMT2 and the other subunits of the BRISC complex. Component of the BRCA1/BRCA2 containing complex (BRCC), which also contains BRCA1, BRCA2, BARD1, BRCC3/BRCC36 and RAD51. BRCC is a ubiquitin E3 ligase complex that enhances cellular survival following DNA damage. May interact with FAS and TNFRSF1A. Expressed in all cell lines examined. Highly expressed in placenta.

Its subcellular location is the cytoplasm. It localises to the nucleus. Functionally, component of the BRCA1-A complex, a complex that specifically recognizes 'Lys-63'-linked ubiquitinated histones H2A and H2AX at DNA lesions sites, leading to target the BRCA1-BARD1 heterodimer to sites of DNA damage at double-strand breaks (DSBs). The BRCA1-A complex also possesses deubiquitinase activity that specifically removes 'Lys-63'-linked ubiquitin on histones H2A and H2AX. In the BRCA1-A complex, it acts as an adapter that bridges the interaction between BABAM1/NBA1 and the rest of the complex, thereby being required for the complex integrity and modulating the E3 ubiquitin ligase activity of the BRCA1-BARD1 heterodimer. Component of the BRISC complex, a multiprotein complex that specifically cleaves 'Lys-63'-linked ubiquitin in various substrates. Within the BRISC complex, acts as an adapter that bridges the interaction between BABAM1/NBA1 and the rest of the complex, thereby being required for the complex integrity. The BRISC complex is required for normal mitotic spindle assembly and microtubule attachment to kinetochores via its role in deubiquitinating NUMA1. The BRISC complex plays a role in interferon signaling via its role in the deubiquitination of the interferon receptor IFNAR1; deubiquitination increases IFNAR1 activity by enhancing its stability and cell surface expression. Down-regulates the response to bacterial lipopolysaccharide (LPS) via its role in IFNAR1 deubiquitination. May play a role in homeostasis or cellular differentiation in cells of neural, epithelial and germline origins. May also act as a death receptor-associated anti-apoptotic protein, which inhibits the mitochondrial apoptotic pathway. May regulate TNF-alpha signaling through its interactions with TNFRSF1A; however these effects may be indirect. This Homo sapiens (Human) protein is BRISC and BRCA1-A complex member 2.